Reading from the N-terminus, the 125-residue chain is Profilin-P (125 aa).

The residue at position 2 (Ser2) is an N-acetylserine.

Belongs to the profilin family. In terms of assembly, occurs in many kinds of cells as a complex with monomeric actin in a 1:1 ratio.

It is found in the cytoplasm. The protein resides in the cytoskeleton. Its function is as follows. Binds to actin and affects the structure of the cytoskeleton. At high concentrations, profilin prevents the polymerization of actin, whereas it enhances it at low concentrations. By binding to PIP2, it inhibits the formation of IP3 and DG. The chain is Profilin-P (PROP) from Physarum polycephalum (Slime mold).